The chain runs to 58 residues: Preprotein translocase subunit SecG (58 aa).

Topologically, residues 1 to 32 (MAQKKKSSGSGLMSSAGLMTYYDADKKAIHVQ) are cytoplasmic. The helical transmembrane segment at 33–54 (PKTVFIFGAICGIVILAFSAGF) threads the bilayer. The Extracellular portion of the chain corresponds to 55-58 (GLWP).

Belongs to the SEC61-beta family. Component of the protein translocase complex. Heterotrimer consisting of alpha (SecY), beta (SecG) and gamma (SecE) subunits. Can form oligomers of the heterotrimer.

The protein localises to the cell membrane. Functionally, involved in protein export. The function of the beta subunit is unknown, but it may be involved in stabilization of the trimeric complex. The sequence is that of Preprotein translocase subunit SecG from Methanococcoides burtonii (strain DSM 6242 / NBRC 107633 / OCM 468 / ACE-M).